Here is a 309-residue protein sequence, read N- to C-terminus: Ribose-phosphate pyrophosphokinase (309 aa).

Residues 37-39 and 96-97 each bind ATP; these read DGE and RQ. Residues histidine 130 and aspartate 169 each coordinate Mg(2+). Lysine 192 is a catalytic residue. D-ribose 5-phosphate-binding positions include arginine 194, aspartate 218, and 222 to 226; that span reads DTAGT.

This sequence belongs to the ribose-phosphate pyrophosphokinase family. Class I subfamily. Homohexamer. Mg(2+) serves as cofactor.

It localises to the cytoplasm. It catalyses the reaction D-ribose 5-phosphate + ATP = 5-phospho-alpha-D-ribose 1-diphosphate + AMP + H(+). Its pathway is metabolic intermediate biosynthesis; 5-phospho-alpha-D-ribose 1-diphosphate biosynthesis; 5-phospho-alpha-D-ribose 1-diphosphate from D-ribose 5-phosphate (route I): step 1/1. Involved in the biosynthesis of the central metabolite phospho-alpha-D-ribosyl-1-pyrophosphate (PRPP) via the transfer of pyrophosphoryl group from ATP to 1-hydroxyl of ribose-5-phosphate (Rib-5-P). The sequence is that of Ribose-phosphate pyrophosphokinase from Campylobacter jejuni subsp. jejuni serotype O:2 (strain ATCC 700819 / NCTC 11168).